A 303-amino-acid polypeptide reads, in one-letter code: Putative F-box protein At5g62060 (303 aa).

One can recognise an F-box domain in the interval Lys27 to Ile74.

The chain is Putative F-box protein At5g62060 from Arabidopsis thaliana (Mouse-ear cress).